We begin with the raw amino-acid sequence, 968 residues long: RNA polymerase-associated protein RapA (968 aa).

The Helicase ATP-binding domain occupies 164-334 (DVGRRHAPRV…FARLRLLDPN (171 aa)). 177-184 (DEVGLGKT) serves as a coordination point for ATP. Positions 280 to 283 (DEAH) match the DEAH box motif. One can recognise a Helicase C-terminal domain in the interval 490–662 (RVEWLMGYLT…YLASPDQTEG (173 aa)).

The protein belongs to the SNF2/RAD54 helicase family. RapA subfamily. Interacts with the RNAP. Has a higher affinity for the core RNAP than for the holoenzyme. Its ATPase activity is stimulated by binding to RNAP.

Its function is as follows. Transcription regulator that activates transcription by stimulating RNA polymerase (RNAP) recycling in case of stress conditions such as supercoiled DNA or high salt concentrations. Probably acts by releasing the RNAP, when it is trapped or immobilized on tightly supercoiled DNA. Does not activate transcription on linear DNA. Probably not involved in DNA repair. The polypeptide is RNA polymerase-associated protein RapA (Escherichia coli O9:H4 (strain HS)).